The sequence spans 31 residues: MEALVYTFLLVGTLGIIFFSIFFREPPRIIK.

The helical transmembrane segment at 3 to 23 threads the bilayer; sequence ALVYTFLLVGTLGIIFFSIFF.

The protein belongs to the PsbT family. As to quaternary structure, PSII is composed of 1 copy each of membrane proteins PsbA, PsbB, PsbC, PsbD, PsbE, PsbF, PsbH, PsbI, PsbJ, PsbK, PsbL, PsbM, PsbT, PsbY, PsbZ, Psb30/Ycf12, at least 3 peripheral proteins of the oxygen-evolving complex and a large number of cofactors. It forms dimeric complexes.

The protein localises to the plastid. It localises to the chloroplast thylakoid membrane. In terms of biological role, found at the monomer-monomer interface of the photosystem II (PS II) dimer, plays a role in assembly and dimerization of PSII. PSII is a light-driven water plastoquinone oxidoreductase, using light energy to abstract electrons from H(2)O, generating a proton gradient subsequently used for ATP formation. In Tupiella akineta (Green alga), this protein is Photosystem II reaction center protein T.